The primary structure comprises 190 residues: Isopentenyl-diphosphate Delta-isomerase (190 aa).

Residues His-27 and His-34 each contribute to the Mn(2+) site. The region spanning 32 to 166 (ALHLAFSCHV…PWAFSPWLTL (135 aa)) is the Nudix hydrolase domain. Cys-69 is a catalytic residue. Residue His-71 participates in Mn(2+) binding. Glu-89 serves as a coordination point for Mg(2+). Mn(2+)-binding residues include Glu-116 and Glu-118. Residue Glu-118 is part of the active site.

This sequence belongs to the IPP isomerase type 1 family. Requires Mg(2+) as cofactor. The cofactor is Mn(2+).

It localises to the cytoplasm. The catalysed reaction is isopentenyl diphosphate = dimethylallyl diphosphate. It functions in the pathway isoprenoid biosynthesis; dimethylallyl diphosphate biosynthesis; dimethylallyl diphosphate from isopentenyl diphosphate: step 1/1. Catalyzes the 1,3-allylic rearrangement of the homoallylic substrate isopentenyl (IPP) to its highly electrophilic allylic isomer, dimethylallyl diphosphate (DMAPP). In Clavibacter sepedonicus (Clavibacter michiganensis subsp. sepedonicus), this protein is Isopentenyl-diphosphate Delta-isomerase.